The sequence spans 458 residues: Transmembrane protein 143 (458 aa).

2 helical membrane-spanning segments follow: residues Leu277 to Ile297 and Leu298 to Val318. Ser329 carries the phosphoserine modification.

It is found in the membrane. This Mus musculus (Mouse) protein is Transmembrane protein 143 (Tmem143).